The chain runs to 247 residues: PF03932 family protein CutC (247 aa).

This sequence belongs to the CutC family.

The protein resides in the cytoplasm. This Vibrio campbellii (strain ATCC BAA-1116) protein is PF03932 family protein CutC.